The primary structure comprises 209 residues: Outer-membrane lipoprotein carrier protein (209 aa).

The first 21 residues, 1-21 (MHRQLRYAVLATALFASTAFA), serve as a signal peptide directing secretion.

Belongs to the LolA family. As to quaternary structure, monomer.

It is found in the periplasm. Participates in the translocation of lipoproteins from the inner membrane to the outer membrane. Only forms a complex with a lipoprotein if the residue after the N-terminal Cys is not an aspartate (The Asp acts as a targeting signal to indicate that the lipoprotein should stay in the inner membrane). This is Outer-membrane lipoprotein carrier protein from Xanthomonas oryzae pv. oryzae (strain MAFF 311018).